The chain runs to 134 residues: Methylglyoxal synthase (134 aa).

One can recognise an MGS-like domain in the interval 1 to 134 (MVNLNIALIA…GLLEWRNAVK (134 aa)). Residues His-11, Lys-15, and 37–40 (TGAT) each bind substrate. Asp-63 serves as the catalytic Proton donor/acceptor. His-90 serves as a coordination point for substrate.

The protein belongs to the methylglyoxal synthase family.

It catalyses the reaction dihydroxyacetone phosphate = methylglyoxal + phosphate. Its function is as follows. Catalyzes the formation of methylglyoxal from dihydroxyacetone phosphate. The sequence is that of Methylglyoxal synthase from Thermoanaerobacterium thermosaccharolyticum (Clostridium thermosaccharolyticum).